Reading from the N-terminus, the 366-residue chain is Putative F-box protein At3g13624 (366 aa).

Residues 1–51 form the F-box domain; that stretch reads MTTISDLPEDVVEEILPRVPLTSLSAVRSICKTWNTLSKNRVLCKAAVKKQ.

This Arabidopsis thaliana (Mouse-ear cress) protein is Putative F-box protein At3g13624.